The chain runs to 511 residues: GMP synthase [glutamine-hydrolyzing] (511 aa).

A Glutamine amidotransferase type-1 domain is found at Asp-5–Val-195. The Nucleophile role is filled by Cys-82. Catalysis depends on residues His-169 and Glu-171. The region spanning Trp-196 to Arg-386 is the GMPS ATP-PPase domain. Ser-223 to Ser-229 provides a ligand contact to ATP.

In terms of assembly, homodimer.

The catalysed reaction is XMP + L-glutamine + ATP + H2O = GMP + L-glutamate + AMP + diphosphate + 2 H(+). It functions in the pathway purine metabolism; GMP biosynthesis; GMP from XMP (L-Gln route): step 1/1. Its function is as follows. Catalyzes the synthesis of GMP from XMP. The protein is GMP synthase [glutamine-hydrolyzing] of Campylobacter jejuni subsp. jejuni serotype O:23/36 (strain 81-176).